A 148-amino-acid chain; its full sequence is Large ribosomal subunit protein bL9 (148 aa).

The protein belongs to the bacterial ribosomal protein bL9 family.

Functionally, binds to the 23S rRNA. The polypeptide is Large ribosomal subunit protein bL9 (Streptomyces avermitilis (strain ATCC 31267 / DSM 46492 / JCM 5070 / NBRC 14893 / NCIMB 12804 / NRRL 8165 / MA-4680)).